Consider the following 272-residue polypeptide: Bis(5'-nucleosyl)-tetraphosphatase, symmetrical (272 aa).

It belongs to the Ap4A hydrolase family.

The catalysed reaction is P(1),P(4)-bis(5'-adenosyl) tetraphosphate + H2O = 2 ADP + 2 H(+). Its function is as follows. Hydrolyzes diadenosine 5',5'''-P1,P4-tetraphosphate to yield ADP. The chain is Bis(5'-nucleosyl)-tetraphosphatase, symmetrical from Ectopseudomonas mendocina (strain ymp) (Pseudomonas mendocina).